Consider the following 97-residue polypeptide: HssA/B-like protein 47 (97 aa).

A disordered region spans residues 1-33 (MTLFSSISSISNPMTSSKSSIASFGSGTSMSSN).

This sequence belongs to the hssA/B family.

This Dictyostelium discoideum (Social amoeba) protein is HssA/B-like protein 47 (hssl47).